A 727-amino-acid chain; its full sequence is Cyclin-T1 (727 aa).

At Ser-117 the chain carries Phosphoserine. The Nuclear localization signal, and interaction with Tat-TAR RNA motif lies at 253-270 (KRIRNWRACQAAKKTKAD). Residues 302–322 (MSTSSTTSTVPSLPTTEESSS) are compositionally biased toward low complexity. A disordered region spans residues 302–326 (MSTSSTTSTVPSLPTTEESSSNLSG). Residue Lys-343 forms a Glycyl lysine isopeptide (Lys-Gly) (interchain with G-Cter in SUMO2) linkage. The stretch at 386–427 (SAKVSLKEYRAKHAEELAAQKRQLENMEANVKSQYAYAAQNL) forms a coiled coil. Ser-390 bears the Phosphoserine mark. Lys-392 bears the N6-acetyllysine mark. A Glycyl lysine isopeptide (Lys-Gly) (interchain with G-Cter in SUMO2) cross-link involves residue Lys-417. Residues Ser-418, Ser-476, and Ser-477 each carry the ADP-ribosylserine modification. The tract at residues 482–552 (IKMRIKVHAA…RPGDPKHSSQ (71 aa)) is histidine-rich domain (HRD). Lys-483 participates in a covalent cross-link: Glycyl lysine isopeptide (Lys-Gly) (interchain with G-Cter in SUMO2). Residues 486-508 (IKVHAAPDKHNSIDDSVTKSREH) show a composition bias toward basic and acidic residues. Disordered stretches follow at residues 486–591 (IKVH…DHPA) and 692–727 (LNPR…PLPK). Lys-487 bears the N6-(ADP-ribosyl)lysine mark. His-489 carries the post-translational modification ADP-ribosylhistidine. A phosphoserine mark is found at Ser-497 and Ser-501. A compositionally biased stretch (basic residues) spans 509 to 532 (KEKHKTHPSNHHHHHNHHSHKHSH). His-532 bears the ADP-ribosylhistidine mark. An ADP-ribosylserine mark is found at Ser-533, Ser-551, and Ser-554. At His-558 the chain carries ADP-ribosylhistidine. Over residues 562 to 572 (SLSSSFSSSSS) the composition is skewed to low complexity. Ser-565 is subject to ADP-ribosylserine. A Phosphoserine modification is found at Ser-566. Pro residues predominate over residues 711-727 (LPPLPSEPPPPLPPLPK).

The protein belongs to the cyclin family. Cyclin C subfamily. Cyclin-T1 is the predominant cyclin that associates with CDK9 to form a heterodimer called P-TEFb. P-TEFb forms a complex with AFF4/AF5Q31. Component of a complex which is at least composed of HTATSF1/Tat-SF1, P-TEFb complex, RNA pol II, SUPT5H, and NCL/nucleolin. Component of the 7SK snRNP complex at least composed of P-TEFb (composed of CDK9 and CCNT1/cyclin-T1), HEXIM1, HEXIM2, BCDIN3, SART3 proteins and 7SK and U6 snRNAs. Interacts (via central region) with ZMYND8 (via N-terminus); the interaction is direct and the association appears to occur between homodimeric ZMYND8 and the activated form of the P-TEFb complex. Interacts with BRD4, targets chromatin binding. Interacts with JMJD6. Interacts with MDFIC. Interacts with HSF1. Interacts with HTATSF1. Interacts with TBX21. ADP-ribosylation on serine residues by PARP1 in response to DNA damage disrupts the phase separation activity of CCNT1, thereby preventing activation of CDK9.

The protein localises to the nucleus. Regulatory subunit of the cyclin-dependent kinase pair (CDK9/cyclin-T1) complex, also called positive transcription elongation factor B (P-TEFb), which facilitates the transition from abortive to productive elongation by phosphorylating the CTD (C-terminal domain) of the large subunit of RNA polymerase II (RNA Pol II). Required to activate the protein kinase activity of CDK9: acts by mediating formation of liquid-liquid phase separation (LLPS) that enhances binding of P-TEFb to the CTD of RNA Pol II. This chain is Cyclin-T1 (CCNT1), found in Equus caballus (Horse).